A 278-amino-acid polypeptide reads, in one-letter code: Non-haem bromoperoxidase BPO-A2 (278 aa).

The AB hydrolase-1 domain maps to 26 to 264 (PVVLIHGFPL…GAPHGLLWTH (239 aa)). Catalysis depends on residues S99, D229, and H258.

It belongs to the AB hydrolase superfamily. Bacterial non-heme haloperoxidase / perhydrolase family. As to quaternary structure, homotrimer.

In terms of biological role, may be a chlorinating enzyme involved in 7-chlorotetracycline biosynthesis. The protein is Non-haem bromoperoxidase BPO-A2 (bpoA2) of Kitasatospora aureofaciens (Streptomyces aureofaciens).